Reading from the N-terminus, the 123-residue chain is Major pollen allergen Ole e 10 (123 aa).

Positions 1 to 21 (MRGTAGVPDQPVPTPTPSVPT) are cleaved as a signal peptide. Positions 1–37 (MRGTAGVPDQPVPTPTPSVPTSSSPVPKPPTQGNKKW) are disordered. A disulfide bridge connects residues C38 and C101.

The N-terminus is blocked. In terms of processing, phosphorylated at Ser-24 when expressed as a recombinant protein in a heterologous system. Post-translationally, not glycosylated. Contains two additional disulfide bonds. As to expression, expressed in mature and germinating pollen.

The protein localises to the cytoplasmic vesicle. In terms of biological role, carbohydrate-binding protein binding preferentially 1,3-beta-glucans. May be involved in pollen tube wall re-formation during germination. In Olea europaea (Common olive), this protein is Major pollen allergen Ole e 10.